Consider the following 118-residue polypeptide: Large ribosomal subunit protein uL22 (118 aa).

Belongs to the universal ribosomal protein uL22 family. As to quaternary structure, part of the 50S ribosomal subunit.

In terms of biological role, this protein binds specifically to 23S rRNA; its binding is stimulated by other ribosomal proteins, e.g. L4, L17, and L20. It is important during the early stages of 50S assembly. It makes multiple contacts with different domains of the 23S rRNA in the assembled 50S subunit and ribosome. The globular domain of the protein is located near the polypeptide exit tunnel on the outside of the subunit, while an extended beta-hairpin is found that lines the wall of the exit tunnel in the center of the 70S ribosome. The polypeptide is Large ribosomal subunit protein uL22 (Thermomicrobium roseum (strain ATCC 27502 / DSM 5159 / P-2)).